The following is a 360-amino-acid chain: Phospho-N-acetylmuramoyl-pentapeptide-transferase (360 aa).

A run of 10 helical transmembrane segments spans residues R24–I44, G69–W89, W92–F112, M133–N153, I158–V178, G199–S219, V239–Y259, V263–I283, F288–V308, and Q337–L357.

This sequence belongs to the glycosyltransferase 4 family. MraY subfamily. Mg(2+) serves as cofactor.

The protein resides in the cell inner membrane. The catalysed reaction is UDP-N-acetyl-alpha-D-muramoyl-L-alanyl-gamma-D-glutamyl-meso-2,6-diaminopimeloyl-D-alanyl-D-alanine + di-trans,octa-cis-undecaprenyl phosphate = di-trans,octa-cis-undecaprenyl diphospho-N-acetyl-alpha-D-muramoyl-L-alanyl-D-glutamyl-meso-2,6-diaminopimeloyl-D-alanyl-D-alanine + UMP. The protein operates within cell wall biogenesis; peptidoglycan biosynthesis. Functionally, catalyzes the initial step of the lipid cycle reactions in the biosynthesis of the cell wall peptidoglycan: transfers peptidoglycan precursor phospho-MurNAc-pentapeptide from UDP-MurNAc-pentapeptide onto the lipid carrier undecaprenyl phosphate, yielding undecaprenyl-pyrophosphoryl-MurNAc-pentapeptide, known as lipid I. The chain is Phospho-N-acetylmuramoyl-pentapeptide-transferase from Neisseria meningitidis serogroup C / serotype 2a (strain ATCC 700532 / DSM 15464 / FAM18).